The following is a 149-amino-acid chain: UPF0756 membrane protein MS1439 (149 aa).

A run of 4 helical transmembrane segments spans residues 10 to 32, 56 to 76, 82 to 102, and 126 to 146; these read IMLVVLILLGVLSNNNSITISAL, VGIIILTVGVLAPLVSGKVQL, FLNWQMFLSIVIGIAVAWFAG, and VAFLGGIPVGPLIAAGILAVI.

It belongs to the UPF0756 family.

The protein resides in the cell membrane. The chain is UPF0756 membrane protein MS1439 from Mannheimia succiniciproducens (strain KCTC 0769BP / MBEL55E).